The sequence spans 187 residues: MNLQHHFLIAMPALQDPIFRRSVVYICEHNTNGAMGIIVNKPLENLKIEGILEKLKITPEPRDESIRLDKPVMLGGPLAEDRGFILHTPPSNFASSIRISDNTVMTTSRDVLETLGTDKQPSDVLVALGYASWEKGQLEQEILDNAWLTAPADLNILFKTPIADRWREAAKLIGVDILTMPGVAGHA.

It belongs to the UPF0301 (AlgH) family.

The sequence is that of UPF0301 protein YqgE from Escherichia coli O139:H28 (strain E24377A / ETEC).